The chain runs to 212 residues: Thymidylate kinase (212 aa).

Residue 11–18 (GPEGAGKT) participates in ATP binding.

It belongs to the thymidylate kinase family.

The catalysed reaction is dTMP + ATP = dTDP + ADP. Functionally, phosphorylation of dTMP to form dTDP in both de novo and salvage pathways of dTTP synthesis. In Streptococcus pneumoniae (strain P1031), this protein is Thymidylate kinase.